The chain runs to 252 residues: Geranylgeranylglyceryl phosphate synthase (252 aa).

2 residues coordinate Mg(2+): D25 and S54. Sn-glycerol 1-phosphate-binding positions include 174-180 (FMDAGSG), 205-206 (GG), and 227-228 (GN).

It belongs to the GGGP/HepGP synthase family. Group II subfamily. As to quaternary structure, homohexamer. Requires Mg(2+) as cofactor.

The enzyme catalyses sn-glycerol 1-phosphate + (2E,6E,10E)-geranylgeranyl diphosphate = sn-3-O-(geranylgeranyl)glycerol 1-phosphate + diphosphate. Prenyltransferase that catalyzes the transfer of the geranylgeranyl moiety of geranylgeranyl diphosphate (GGPP) to the C3 hydroxyl of sn-glycerol-1-phosphate (G1P). This Chitinophaga pinensis (strain ATCC 43595 / DSM 2588 / LMG 13176 / NBRC 15968 / NCIMB 11800 / UQM 2034) protein is Geranylgeranylglyceryl phosphate synthase.